The primary structure comprises 691 residues: Methionine--tRNA ligase (691 aa).

The short motif at 14–24 (PYANGPFHLGH) is the 'HIGH' region element. Positions 148, 151, 161, and 164 each coordinate Zn(2+). The short motif at 344–348 (KMSKS) is the 'KMSKS' region element. An ATP-binding site is contributed by Lys347. A tRNA-binding domain is found at 585 to 691 (DFDRVDLRVA…PGAKPGMRVR (107 aa)).

It belongs to the class-I aminoacyl-tRNA synthetase family. MetG type 1 subfamily. As to quaternary structure, homodimer. Requires Zn(2+) as cofactor.

It localises to the cytoplasm. The enzyme catalyses tRNA(Met) + L-methionine + ATP = L-methionyl-tRNA(Met) + AMP + diphosphate. Is required not only for elongation of protein synthesis but also for the initiation of all mRNA translation through initiator tRNA(fMet) aminoacylation. The sequence is that of Methionine--tRNA ligase from Verminephrobacter eiseniae (strain EF01-2).